Here is a 148-residue protein sequence, read N- to C-terminus: Cystatin-D (148 aa).

An N-terminal signal peptide occupies residues 1–33; it reads MASLLSPSMPVLAAVALTLTLAVIPEASTNAEA. One can recognise a Cystatin kininogen-type domain in the interval 36–148; it reads VVLGGVEPAD…SMTNFNCYNF (113 aa). Intrachain disulfides connect Cys101-Cys111 and Cys125-Cys145.

It belongs to the cystatin family. In cartilage, expressed mainly in mature chondrocytes including prehypertrophic and hypertrophic cells (at protein level). Expressed exclusively in cartilage.

The protein resides in the cytoplasm. It is found in the cytosol. May play a role in the last steps of the chondrocyte differentiation pathway as an inducer of maturation. Induces chondrocyte calcification during endochondral ossification by playing a role in the transcriptional inhibition of ENPP1, a generator of pyrophosphate which inhibits calcification. Possibly impairs the binding of a transcription factor to the ENPP1 promoter. Unlike other cystatins, does not have thiol protease inhibitor activity. This Mus musculus (Mouse) protein is Cystatin-D.